Consider the following 191-residue polypeptide: Pyridoxal 5'-phosphate synthase subunit PdxT (191 aa).

An L-glutamine-binding site is contributed by 46–48 (GES). Cysteine 78 acts as the Nucleophile in catalysis. Residues arginine 105 and 133–134 (IR) each bind L-glutamine. Residues histidine 169 and glutamate 171 each act as charge relay system in the active site.

Belongs to the glutaminase PdxT/SNO family. As to quaternary structure, in the presence of PdxS, forms a dodecamer of heterodimers. Only shows activity in the heterodimer.

The enzyme catalyses aldehydo-D-ribose 5-phosphate + D-glyceraldehyde 3-phosphate + L-glutamine = pyridoxal 5'-phosphate + L-glutamate + phosphate + 3 H2O + H(+). It catalyses the reaction L-glutamine + H2O = L-glutamate + NH4(+). Its pathway is cofactor biosynthesis; pyridoxal 5'-phosphate biosynthesis. In terms of biological role, catalyzes the hydrolysis of glutamine to glutamate and ammonia as part of the biosynthesis of pyridoxal 5'-phosphate. The resulting ammonia molecule is channeled to the active site of PdxS. In Fervidobacterium nodosum (strain ATCC 35602 / DSM 5306 / Rt17-B1), this protein is Pyridoxal 5'-phosphate synthase subunit PdxT.